Consider the following 362-residue polypeptide: Histidine protein methyltransferase 1 homolog (362 aa).

The interval 28–89 is disordered; the sequence is KSQKGKEDKN…ACEKQPSLKP (62 aa). Positions 55–73 are enriched in polar residues; sequence SLGSAASSEDTDSPPSTAD. Phosphoserine is present on residues Ser62 and Ser67. A Tele-methylhistidine modification is found at His144. Residues 158–162, Gly185, and 206–208 contribute to the S-adenosyl-L-methionine site; these read IWECT and QDY. The Nuclear localization signal signature appears at 237 to 243; the sequence is PAGKRQR. S-adenosyl-L-methionine is bound by residues 259-261 and Ser283; that span reads GEW.

This sequence belongs to the methyltransferase superfamily. METTL18 family. As to quaternary structure, interacts with GRWD1 and members of the heat shock protein 90 and 70 families; these proteins may possibly be methylation substrates for the enzyme. Post-translationally, monomethylated at His-144 through automethylation. Automethylation at His-144 positively regulates the methyltransferase activity toward RPL3. Probably methylated on other residues.

Its subcellular location is the cytoplasm. It localises to the cytosol. It is found in the nucleus. The protein localises to the nucleolus. It carries out the reaction L-histidyl-[protein] + S-adenosyl-L-methionine = N(tele)-methyl-L-histidyl-[protein] + S-adenosyl-L-homocysteine + H(+). Protein-L-histidine N-tele-methyltransferase that specifically monomethylates RPL3, thereby regulating translation elongation. Histidine methylation of RPL3 regulates translation elongation by slowing ribosome traversal on tyrosine codons: slower elongation provides enough time for proper folding of synthesized proteins and prevents cellular aggregation of tyrosine-rich proteins. The chain is Histidine protein methyltransferase 1 homolog from Rattus norvegicus (Rat).